Reading from the N-terminus, the 471-residue chain is Glutamate--tRNA ligase (471 aa).

The 'HIGH' region motif lies at 9 to 19; that stretch reads PSPTGYLHVGG. Residues cysteine 98, cysteine 100, cysteine 125, and histidine 127 each coordinate Zn(2+). The short motif at 237–241 is the 'KMSKS' region element; the sequence is KLSKR. Lysine 240 lines the ATP pocket.

It belongs to the class-I aminoacyl-tRNA synthetase family. Glutamate--tRNA ligase type 1 subfamily. As to quaternary structure, monomer. It depends on Zn(2+) as a cofactor.

It localises to the cytoplasm. It catalyses the reaction tRNA(Glu) + L-glutamate + ATP = L-glutamyl-tRNA(Glu) + AMP + diphosphate. In terms of biological role, catalyzes the attachment of glutamate to tRNA(Glu) in a two-step reaction: glutamate is first activated by ATP to form Glu-AMP and then transferred to the acceptor end of tRNA(Glu). The protein is Glutamate--tRNA ligase of Enterobacter sp. (strain 638).